Here is a 390-residue protein sequence, read N- to C-terminus: Immunoglobulin mu Fc receptor (390 aa).

The N-terminal stretch at 1–16 (MDFWLWPLYFLPVSGA) is a signal peptide. Residues 17–251 (LRILPEVKVE…GSQSGREGQG (235 aa)) lie on the Extracellular side of the membrane. The 101-residue stretch at 23–123 (VKVEGELGGS…KTQKVTLNVH (101 aa)) folds into the Ig-like domain. The tract at residues 33–115 (VTIKCPLPEM…AGMNTDRGKT (83 aa)) is CDR4. Cystine bridges form between Cys-37-Cys-104 and Cys-49-Cys-58. Positions 40–45 (PEMHVR) are CDR1. Positions 59–70 (GTVVSTTNFIKA) are CDR2. Thr-92 is subject to Phosphothreonine. The interval 106-115 (AGMNTDRGKT) is CDR3. The disordered stretch occupies residues 166-204 (PAQRGKVPPVHHSSPTTQITHRPRVSRASSVAGDKPRTF). A helical transmembrane segment spans residues 252–272 (FHILIPTILGLFLLALLGLVV). The Cytoplasmic portion of the chain corresponds to 273–390 (KRAVERRKAL…DSDDYINVPA (118 aa)). Low complexity-rich tracts occupy residues 293–311 (MRALESSQRPRGSPRPRSQ) and 325–334 (ADAAGTGEAP). The segment at 293-348 (MRALESSQRPRGSPRPRSQNNIYSACPRRARGADAAGTGEAPVPGPGAPLPPAPLQ) is disordered. Residues 335–346 (VPGPGAPLPPAP) show a composition bias toward pro residues.

In terms of assembly, interacts (via Ig-like domain) with IGHM (via CH4/Cmu4 domain), both secreted and membrane-bound IgM; the interaction is glycan-independent and multivalent theoretically involving up to eight binding sites for the IgM pentamer. In terms of processing, phosphorylated on both Tyr and Ser residues. O-glycosylated. Sialylated. O-linked glycans regulate trafficking to the plasma membrane. Expressed by CD19-positive B cells and CD4-positive and CD8-positive T cell populations in primary and secondary lymphoid tissues (at protein level). Among B cell subsets, detected in a subset of bone marrow pro- and pre-B cells, in most follicular and memory B cells and in a small subset of germinal center B cells (at protein level). Expressed at lower levels in CD56-positive NK cells (at protein level). Expressed in lymph nodes, lung, thymus and kidneys. Very weak expression detected in spleen, liver, heart, and salivary gland.

The protein localises to the cell membrane. It localises to the early endosome membrane. The protein resides in the golgi apparatus. It is found in the trans-Golgi network membrane. Its subcellular location is the lysosome membrane. The protein localises to the secreted. High-affinity Fc receptor for immunoglobulin M (IgM), both secreted and membrane-bound IgM. Primarily regulates IgM transport and homeostasis. In lymphoid cells, enables exocytosis of membrane-bound IgM on the plasma membrane as well as endocytosis of IgM-antigen complexes toward lysosomes for degradation. In mucosal epithelium, mediates retrotranscytosis of antigen-IgM complexes across mucosal M cells toward antigen-presenting cells in mucosal lymphoid tissues. Triggers costimulatory signaling and mediates most of IgM effector functions involved in B cell development and primary immune response to infection. Likely limits tonic IgM BCR signaling to self-antigens for proper negative selection of autoreactive B cells in the bone marrow and for the maintenance of regulatory B cell pool in peripheral lymphoid organs. Mediates antibody responses to T cell-dependent and T cell-independent antigens and promotes induction of an efficient neutralizing IgG response. Engages in cross-talk with antigen-receptor signaling via the non-canonical NF-kappa-B, MAP kinases and calcium signaling pathways. This Homo sapiens (Human) protein is Immunoglobulin mu Fc receptor.